A 362-amino-acid chain; its full sequence is Chorismate synthase (362 aa).

Arg-48 and Arg-54 together coordinate NADP(+). FMN is bound by residues 125 to 127 (RSS), 238 to 239 (NA), Gly-286, 301 to 305 (KPTSS), and Arg-327.

It belongs to the chorismate synthase family. Homotetramer. FMNH2 is required as a cofactor.

The enzyme catalyses 5-O-(1-carboxyvinyl)-3-phosphoshikimate = chorismate + phosphate. Its pathway is metabolic intermediate biosynthesis; chorismate biosynthesis; chorismate from D-erythrose 4-phosphate and phosphoenolpyruvate: step 7/7. Its function is as follows. Catalyzes the anti-1,4-elimination of the C-3 phosphate and the C-6 proR hydrogen from 5-enolpyruvylshikimate-3-phosphate (EPSP) to yield chorismate, which is the branch point compound that serves as the starting substrate for the three terminal pathways of aromatic amino acid biosynthesis. This reaction introduces a second double bond into the aromatic ring system. The protein is Chorismate synthase of Granulibacter bethesdensis (strain ATCC BAA-1260 / CGDNIH1).